The primary structure comprises 342 residues: dTDP-3,4-didehydro-2,6-dideoxy-alpha-D-glucose 3-reductase (342 aa).

Residue 19–25 (CADIALR) coordinates NADP(+). Residue Arg-26 participates in substrate binding. NADP(+) is bound by residues 44 to 45 (SR), Tyr-65, Leu-81, and His-86. Lys-104 functions as the Proton donor in the catalytic mechanism. 2 residues coordinate NADP(+): Arg-172 and Asp-184. Substrate is bound by residues Tyr-243 and Ser-263.

The protein belongs to the Gfo/Idh/MocA family.

It catalyses the reaction dTDP-4-dehydro-2,6-dideoxy-alpha-D-glucose + NADP(+) = dTDP-3,4-didehydro-2,6-dideoxy-alpha-D-glucose + NADPH + H(+). It participates in antibiotic biosynthesis; granaticin biosynthesis. Functionally, involved in the biosynthesis of the 2,6-deoxysugar, dTDP-L-rhodinose, attached to the benzoisochromane quinone chromophore to produce the aglycone antibiotics granaticin and granaticin B. Catalyzes the reduction of the C-3 keto moiety of dTDP-3,4-diketo-2,6-dideoxy-alpha-D-glucose to yield dTDP-4-keto-2,6-dideoxy-alpha-D-glucose. NADPH is the better reductant, however NADH can also be used. This is dTDP-3,4-didehydro-2,6-dideoxy-alpha-D-glucose 3-reductase from Streptomyces violaceoruber.